The following is a 107-amino-acid chain: ATP-dependent Clp protease adapter protein ClpS (107 aa).

Basic and acidic residues predominate over residues 1–12 (MSGDKDFDKDSD). The disordered stretch occupies residues 1–21 (MSGDKDFDKDSDVTVITRTTP).

The protein belongs to the ClpS family. In terms of assembly, binds to the N-terminal domain of the chaperone ClpA.

Involved in the modulation of the specificity of the ClpAP-mediated ATP-dependent protein degradation. The protein is ATP-dependent Clp protease adapter protein ClpS of Zymomonas mobilis subsp. mobilis (strain ATCC 31821 / ZM4 / CP4).